Here is a 144-residue protein sequence, read N- to C-terminus: Prefoldin subunit alpha (144 aa).

Belongs to the prefoldin alpha subunit family. In terms of assembly, heterohexamer of two alpha and four beta subunits.

Its subcellular location is the cytoplasm. In terms of biological role, molecular chaperone capable of stabilizing a range of proteins. Seems to fulfill an ATP-independent, HSP70-like function in archaeal de novo protein folding. This chain is Prefoldin subunit alpha, found in Methanococcus maripaludis (strain C7 / ATCC BAA-1331).